The sequence spans 394 residues: Elongation factor Tu 2 (394 aa).

In terms of domain architecture, tr-type G spans 10 to 204 (KPHVNVGTIG…ALDTYIPEPE (195 aa)). A G1 region spans residues 19-26 (GHVDHGKT). 19–26 (GHVDHGKT) contacts GTP. Thr-26 serves as a coordination point for Mg(2+). A G2 region spans residues 60-64 (GITIS). Positions 81–84 (DCPG) are G3. Residues 81-85 (DCPGH) and 136-139 (NKCD) each bind GTP. The segment at 136–139 (NKCD) is G4. The segment at 174–176 (SAL) is G5.

This sequence belongs to the TRAFAC class translation factor GTPase superfamily. Classic translation factor GTPase family. EF-Tu/EF-1A subfamily. In terms of assembly, monomer.

Its subcellular location is the cytoplasm. The enzyme catalyses GTP + H2O = GDP + phosphate + H(+). In terms of biological role, GTP hydrolase that promotes the GTP-dependent binding of aminoacyl-tRNA to the A-site of ribosomes during protein biosynthesis. This is Elongation factor Tu 2 from Vibrio vulnificus (strain CMCP6).